The primary structure comprises 199 residues: uncharacterized protein (199 aa).

The helical transmembrane segment at 17–37 (AGAVTLGIGFFALASALWFLI) threads the bilayer.

The protein resides in the membrane. This is an uncharacterized protein from Homo sapiens (Human).